Reading from the N-terminus, the 209-residue chain is MEFVTALADLRAEASCPICLDYLKDPVTISCGHNFCLSCIIMSWKDLHDSFPCPFCHFCCPERKFISNPQLGSLTEIAKQLQIRSKKRKRQEEKHVCKKHNQVLTFFCQKDLELLCPRCSLSTDHQHHCVWPIKKAASYHRKKLEEYNAPWKERVELIEKVITMQTRKSLELKKKMESPSVTRLECSCTISAHFNLRLPGSSDSSASGS.

The RING-type zinc-finger motif lies at Cys16–His57. The B box-type zinc finger occupies Glu92–Ile133. Cys97, His100, Cys119, and His125 together coordinate Zn(2+).

In Homo sapiens (Human), this protein is Putative tripartite motif-containing protein 61 (TRIM61).